We begin with the raw amino-acid sequence, 559 residues long: MTQFTQNTAMPSSLWQYWRGLSGWNFYFLVKFGLLWAGYLNFHPLLNLVFAAFLLMPLPRYSLHRLRHWIALPIGFALFWHDTWLPGPESIMSQGSQVAGFSTDYLIDLVTRFINWQMIGAIFVLLVAWLFLSQWIRITVFVVAILLWLNVLTLAGPSFSLWPAGQPTTTVTTTGGNAAATVAATGGAPVVGDMPAQTAPPTTANLNAWLNNFYNAEAKRKSTFPSSLPADAQPFELLVINICSLSWSDIEAAGLMSHPLWSHFDIEFKNFNSATSYSGPAAIRLLRASCGQTSHTNLYQPANNDCYLFDNLSKLGFTQHLMMGHNGQFGGFLKEVRENGGMQSELMDQTNLPVILLGFDGSPVYDDTAVLNRWLDVTEKDKNSRSATFYNTLPLHDGNHYPGVSKTADYKARAQKFFDELDAFFTELEKSGRKVMVVVVPEHGGALKGDRMQVSGLRDIPSPSITDVPVGVKFFGMKAPHQGAPIVIEQPSSFLAISDLVVRVLDGKIFTEDNVDWKKLTSGLPQTAPVSENSNAVVIQYQDKPYVRLNGGDWVPYPQ.

Helical transmembrane passes span Leu34–Leu54, His68–Pro88, Phe113–Ser133, and Ile138–Ser158.

The protein localises to the cell inner membrane. The protein is Cellulose biosynthesis protein BcsG (bcsG) of Escherichia coli (strain K12).